A 90-amino-acid chain; its full sequence is DNA-binding protein HU-alpha (90 aa).

It belongs to the bacterial histone-like protein family. As to quaternary structure, heterodimer of an alpha and a beta chain.

In terms of biological role, histone-like DNA-binding protein which is capable of wrapping DNA to stabilize it, and thus to prevent its denaturation under extreme environmental conditions. The sequence is that of DNA-binding protein HU-alpha (hupA) from Vibrio cholerae serotype O1 (strain ATCC 39315 / El Tor Inaba N16961).